A 229-amino-acid polypeptide reads, in one-letter code: Uracil-DNA glycosylase (229 aa).

Aspartate 64 (proton acceptor) is an active-site residue.

This sequence belongs to the uracil-DNA glycosylase (UDG) superfamily. UNG family.

Its subcellular location is the cytoplasm. It carries out the reaction Hydrolyzes single-stranded DNA or mismatched double-stranded DNA and polynucleotides, releasing free uracil.. In terms of biological role, excises uracil residues from the DNA which can arise as a result of misincorporation of dUMP residues by DNA polymerase or due to deamination of cytosine. The chain is Uracil-DNA glycosylase from Klebsiella pneumoniae subsp. pneumoniae (strain ATCC 700721 / MGH 78578).